The chain runs to 289 residues: Methionyl-tRNA formyltransferase (289 aa).

106 to 109 (SLLP) is a binding site for (6S)-5,6,7,8-tetrahydrofolate.

Belongs to the Fmt family.

It carries out the reaction L-methionyl-tRNA(fMet) + (6R)-10-formyltetrahydrofolate = N-formyl-L-methionyl-tRNA(fMet) + (6S)-5,6,7,8-tetrahydrofolate + H(+). Its function is as follows. Attaches a formyl group to the free amino group of methionyl-tRNA(fMet). The formyl group appears to play a dual role in the initiator identity of N-formylmethionyl-tRNA by promoting its recognition by IF2 and preventing the misappropriation of this tRNA by the elongation apparatus. In Mycoplasmopsis pulmonis (strain UAB CTIP) (Mycoplasma pulmonis), this protein is Methionyl-tRNA formyltransferase.